Reading from the N-terminus, the 333-residue chain is Complement C1q and tumor necrosis factor-related protein 9 (333 aa).

An N-terminal signal peptide occupies residues Met1–Ser19. The segment at Thr22–Gly194 is disordered. Collagen-like domains follow at residues Arg24–Val82, Ala84–Val130, and Gly134–Val193. A 4-hydroxyproline mark is found at Pro31, Pro34, and Pro40. A compositionally biased stretch (basic and acidic residues) spans Arg42–Glu57. 4-hydroxyproline is present on residues Pro58, Pro61, and Pro64. Residues Asp67 to Lys88 show a composition bias toward basic and acidic residues. A 5-hydroxylysine modification is found at Lys73. O-linked (Gal...) hydroxylysine glycosylation is present at Lys73. 4-hydroxyproline occurs at positions 76 and 115. Lys127 is subject to 5-hydroxylysine. Lys127 is a glycosylation site (O-linked (Gal...) hydroxylysine). 3 positions are modified to 4-hydroxyproline: Pro151, Pro160, and Pro175. Residues Trp183–Val193 show a composition bias toward basic and acidic residues. One can recognise a C1q domain in the interval Pro197–Ser333.

As to quaternary structure, multimers (predominantly trimers). Interacts with ADIPOQ via the C1q domain to form a heterotrimeric complex. In terms of processing, the isomeric forms of the hydroxylated amino acids could not be determined in the mass-spectrometric methods reported in PubMed:18787108 but are assumed on the basis of their occurrence in collagen-like domains. As to expression, expressed predominantly in adipose tissue. Females express higher levels than males.

The protein resides in the secreted. Probable adipokine. Activates AMPK, AKT, and p44/42 MAPK signaling pathways. In Mus musculus (Mouse), this protein is Complement C1q and tumor necrosis factor-related protein 9 (C1qtnf9).